Here is a 403-residue protein sequence, read N- to C-terminus: L-cysteine:1D-myo-inositol 2-amino-2-deoxy-alpha-D-glucopyranoside ligase (403 aa).

Residue C43 coordinates Zn(2+). L-cysteinyl-5'-AMP is bound by residues C43 to T46, T58, N81 to T83, and W223. Residues I45–H55 carry the 'HIGH' region motif. Zn(2+) is bound at residue C227. L-cysteinyl-5'-AMP is bound at residue G245–D247. H252 is a binding site for Zn(2+). V278 is an L-cysteinyl-5'-AMP binding site. The 'KMSKS' region motif lies at K284 to S288.

Belongs to the class-I aminoacyl-tRNA synthetase family. MshC subfamily. As to quaternary structure, monomer. Zn(2+) is required as a cofactor.

The enzyme catalyses 1D-myo-inositol 2-amino-2-deoxy-alpha-D-glucopyranoside + L-cysteine + ATP = 1D-myo-inositol 2-(L-cysteinylamino)-2-deoxy-alpha-D-glucopyranoside + AMP + diphosphate + H(+). Its function is as follows. Catalyzes the ATP-dependent condensation of GlcN-Ins and L-cysteine to form L-Cys-GlcN-Ins. This chain is L-cysteine:1D-myo-inositol 2-amino-2-deoxy-alpha-D-glucopyranoside ligase, found in Acidothermus cellulolyticus (strain ATCC 43068 / DSM 8971 / 11B).